The following is a 335-amino-acid chain: Dihydroorotate dehydrogenase (quinone) (335 aa).

FMN is bound by residues 59-63 (AGLDK) and threonine 83. Lysine 63 is a binding site for substrate. 108 to 112 (NRMGF) serves as a coordination point for substrate. 2 residues coordinate FMN: asparagine 136 and asparagine 169. Asparagine 169 lines the substrate pocket. The active-site Nucleophile is the serine 172. Residue asparagine 174 participates in substrate binding. Positions 214 and 242 each coordinate FMN. A substrate-binding site is contributed by 243 to 244 (NT). Residues glycine 265, glycine 294, and 315 to 316 (YS) contribute to the FMN site.

Belongs to the dihydroorotate dehydrogenase family. Type 2 subfamily. As to quaternary structure, monomer. It depends on FMN as a cofactor.

It is found in the cell membrane. The catalysed reaction is (S)-dihydroorotate + a quinone = orotate + a quinol. It functions in the pathway pyrimidine metabolism; UMP biosynthesis via de novo pathway; orotate from (S)-dihydroorotate (quinone route): step 1/1. Functionally, catalyzes the conversion of dihydroorotate to orotate with quinone as electron acceptor. The chain is Dihydroorotate dehydrogenase (quinone) from Neisseria meningitidis serogroup A / serotype 4A (strain DSM 15465 / Z2491).